The primary structure comprises 552 residues: uncharacterized protein (552 aa).

ATP is bound at residue 29–36; that stretch reads GENAWGKS. A Toprim domain is found at 379 to 469; the sequence is RCWLLVEGET…AEREHLTALP (91 aa).

This is an uncharacterized protein from Escherichia coli (strain K12).